We begin with the raw amino-acid sequence, 70 residues long: ANPCNPAQLTPCAGPALFGGAVPPACCAQLRAQQGCLCGYARSPNYGSYIRSPNAARLFAICNLPMPRCR.

Intrachain disulfides connect Cys4–Cys38, Cys12–Cys26, Cys27–Cys62, and Cys36–Cys69.

Functionally, potential phospholipid transfer protein. This is Probable non-specific lipid-transfer protein 2 from Zea mays (Maize).